Reading from the N-terminus, the 688-residue chain is Pescadillo homolog (688 aa).

The BRCT domain maps to 351–470; sequence EVASLFASFT…KLLRHDLYAP (120 aa). 2 disordered regions span residues 411-442 and 496-688; these read RPPL…GTRM and AEQE…TKGR. The segment covering 412 to 424 has biased composition (pro residues); sequence PPLPESALPPLPQ. Residues 496–536 adopt a coiled-coil conformation; sequence AEQESDGEAERQAEEENEEEESEVEGLSMDKEMVETENSEA. Composition is skewed to acidic residues over residues 510 to 519, 530 to 544, 554 to 565, and 576 to 589; these read EENEEEESEV, ETEN…EESV, GSDDEEEESEED, and EAAD…DDEE. Positions 619 to 634 are enriched in basic residues; the sequence is KKSKKQKPLAKKHAAQ. A coiled-coil region spans residues 627-686; sequence LAKKHAAQKKKEQEELERQKMMMSRKKRKLLDKMLYSNKKKDEEAEKLRRKRRKIEQGTK. Positions 635–646 are enriched in basic and acidic residues; that stretch reads KKKEQEELERQK.

The protein belongs to the pescadillo family. In terms of assembly, component of the NOP7 complex, composed of ERB1, NOP7 and YTM1. The complex is held together by ERB1, which interacts with NOP7 via its N-terminal domain and with YTM1 via a high-affinity interaction between the seven-bladed beta-propeller domains of the 2 proteins. The NOP7 complex associates with the 66S pre-ribosome.

Its subcellular location is the nucleus. It is found in the nucleolus. The protein resides in the nucleoplasm. Functionally, component of the NOP7 complex, which is required for maturation of the 25S and 5.8S ribosomal RNAs and formation of the 60S ribosome. The polypeptide is Pescadillo homolog (Coccidioides immitis (strain RS) (Valley fever fungus)).